Here is a 302-residue protein sequence, read N- to C-terminus: Cuticle collagen dpy-13 (302 aa).

Triple-helical region stretches follow at residues 106 to 135, 154 to 210, and 219 to 278; these read GPQG…PGKA, GPPG…EGLP, and GEPG…PGTP. Residues 108–284 are disordered; sequence QGAPGAPGKP…PGTPGERGIC (177 aa). The segment covering 144 to 159 has biased composition (pro residues); that stretch reads TPPPCKPCPQGPPGAP. Low complexity predominate over residues 188–197; the sequence is PKGPNGAPGK. Pro residues-rich tracts occupy residues 247–257 and 268–277; these read QPGPKGPPGPD and QPGPVGPPGT.

This sequence belongs to the cuticular collagen family. Collagen polypeptide chains are complexed within the cuticle by disulfide bonds and other types of covalent cross-links.

Functionally, nematode cuticles are composed largely of collagen-like proteins. The cuticle functions both as an exoskeleton and as a barrier to protect the worm from its environment. Mutations in dpy-13 affects the body shape. This chain is Cuticle collagen dpy-13 (dpy-13), found in Caenorhabditis elegans.